A 428-amino-acid polypeptide reads, in one-letter code: Enolase (428 aa).

Residue Gln163 coordinates (2R)-2-phosphoglycerate. Glu205 (proton donor) is an active-site residue. Mg(2+) contacts are provided by Asp242, Glu286, and Asp313. (2R)-2-phosphoglycerate-binding residues include Lys338, Arg367, Ser368, and Lys389. Lys338 functions as the Proton acceptor in the catalytic mechanism.

This sequence belongs to the enolase family. It depends on Mg(2+) as a cofactor.

It is found in the cytoplasm. The protein resides in the secreted. Its subcellular location is the cell surface. The enzyme catalyses (2R)-2-phosphoglycerate = phosphoenolpyruvate + H2O. Its pathway is carbohydrate degradation; glycolysis; pyruvate from D-glyceraldehyde 3-phosphate: step 4/5. Catalyzes the reversible conversion of 2-phosphoglycerate (2-PG) into phosphoenolpyruvate (PEP). It is essential for the degradation of carbohydrates via glycolysis. The polypeptide is Enolase (Syntrophus aciditrophicus (strain SB)).